The sequence spans 71 residues: Omega-conotoxin-like CnVIIE (71 aa).

Positions 1-22 (MKLTCVVIVAVLLLTACQLITA) are cleaved as a signal peptide. The propeptide occupies 23–45 (DDSRGTQKHRALRSDTKLSMSTR). 3 disulfides stabilise this stretch: C46–C61, C53–C65, and C60–C70. Residue P52 is modified to 4-hydroxyproline; partial. At C70 the chain carries Cysteine amide.

The protein belongs to the conotoxin M superfamily. As to expression, expressed by the venom duct.

The protein resides in the secreted. Its function is as follows. Omega-conotoxins act at presynaptic membranes, they bind and block voltage-gated calcium channels (Cav). The protein is Omega-conotoxin-like CnVIIE of Conus consors (Singed cone).